The chain runs to 405 residues: Aspartokinase (405 aa).

2 consecutive ACT domains span residues 267 to 344 (VSME…AKVS) and 345 to 405 (IVGV…QLDQ).

It belongs to the aspartokinase family.

The catalysed reaction is L-aspartate + ATP = 4-phospho-L-aspartate + ADP. The protein operates within amino-acid biosynthesis; L-lysine biosynthesis via DAP pathway; (S)-tetrahydrodipicolinate from L-aspartate: step 1/4. Its pathway is amino-acid biosynthesis; L-methionine biosynthesis via de novo pathway; L-homoserine from L-aspartate: step 1/3. It participates in amino-acid biosynthesis; L-threonine biosynthesis; L-threonine from L-aspartate: step 1/5. The polypeptide is Aspartokinase (lysC) (Helicobacter pylori (strain J99 / ATCC 700824) (Campylobacter pylori J99)).